Here is a 176-residue protein sequence, read N- to C-terminus: RNA pyrophosphohydrolase (176 aa).

Positions 6–149 (GYRPNVGIVI…KRDVYRRVMK (144 aa)) constitute a Nudix hydrolase domain. The short motif at 38-59 (GGINPGESPEQAMYRELYEEVG) is the Nudix box element.

It belongs to the Nudix hydrolase family. RppH subfamily. It depends on a divalent metal cation as a cofactor.

Functionally, accelerates the degradation of transcripts by removing pyrophosphate from the 5'-end of triphosphorylated RNA, leading to a more labile monophosphorylated state that can stimulate subsequent ribonuclease cleavage. In Photorhabdus laumondii subsp. laumondii (strain DSM 15139 / CIP 105565 / TT01) (Photorhabdus luminescens subsp. laumondii), this protein is RNA pyrophosphohydrolase.